Reading from the N-terminus, the 505-residue chain is Flagellin (505 aa).

It belongs to the bacterial flagellin family.

Its subcellular location is the secreted. It localises to the bacterial flagellum. In terms of biological role, flagellin is the subunit protein which polymerizes to form the filaments of bacterial flagella. This is Flagellin (fliC) from Salmonella rostock.